We begin with the raw amino-acid sequence, 1156 residues long: Chromosome partition protein Smc (1156 aa).

37 to 44 (PNGAGKSN) serves as a coordination point for ATP. Residues 167–499 (SGIGEYERKK…AIEREVRSFS (333 aa)) are a coiled coil. Residues 509 to 624 (KGVYGSVSEL…VENFESAKAI (116 aa)) enclose the SMC hinge domain. Residues 654–1001 (GELNKRYYEE…EETENKKRKV (348 aa)) adopt a coiled-coil conformation.

It belongs to the SMC family. As to quaternary structure, homodimer.

It localises to the cytoplasm. In terms of biological role, required for chromosome condensation and partitioning. This chain is Chromosome partition protein Smc, found in Aquifex aeolicus (strain VF5).